A 437-amino-acid polypeptide reads, in one-letter code: Selenocysteine lyase (437 aa).

N-acetylmethionine is present on Met-1. The disordered stretch occupies residues 1–30 (MEAAGARNRDARSRAEKSPPESRKVYMDYN). A compositionally biased stretch (basic and acidic residues) spans 7–26 (RNRDARSRAEKSPPESRKVY). Lys-252 carries the N6-(pyridoxal phosphate)lysine modification. Cys-380 serves as the catalytic S-selanylcysteine intermediate.

This sequence belongs to the class-V pyridoxal-phosphate-dependent aminotransferase family. In terms of assembly, homodimer. It depends on pyridoxal 5'-phosphate as a cofactor.

It localises to the cytoplasm. It is found in the cytosol. The enzyme catalyses L-selenocysteine + AH2 = hydrogenselenide + L-alanine + A + H(+). Its function is as follows. Catalyzes the decomposition of L-selenocysteine to L-alanine and elemental selenium. The protein is Selenocysteine lyase (SCLY) of Bos taurus (Bovine).